The primary structure comprises 88 residues: Acyl-CoA-binding domain-containing protein 7 (88 aa).

The region spanning 3-88 is the ACB domain; the sequence is LQADFDKAAK…AKELIEKYGI (86 aa). An acyl-CoA-binding positions include Arg-15, 30 to 34, Lys-56, and Tyr-75; that span reads YGLYK.

The protein belongs to the ACBD7 family.

Its function is as follows. Binds medium- and long-chain acyl-CoA esters. The chain is Acyl-CoA-binding domain-containing protein 7 (ACBD7) from Bos taurus (Bovine).